A 2000-amino-acid polypeptide reads, in one-letter code: E3 ubiquitin-protein ligase TTC3 (2000 aa).

Positions 20-249 (MDDFAEGGLS…RHSCMQCVKQ (230 aa)) are interaction with POLG. 2 TPR repeats span residues 250–283 (GELM…RPEN) and 284–317 (HLLY…KNTW). A Phosphoserine modification is found at Ser397. Positions 442-478 (CDCHPEFLPPPSQPPRHKGKQKSRNNESEKPSSNSQV) are disordered. TPR repeat units lie at residues 556-592 (VLVV…YPNE) and 596-629 (CLAY…ICRL). Residues 804–828 (AQERMEEDLRESNPPKPEEPEETVE) are disordered. Ser1029 bears the Phosphoserine mark. 5 disordered regions span residues 1041 to 1087 (NKGK…GPFA), 1233 to 1308 (FQPD…PEDA), 1423 to 1448 (QSST…SSDS), 1806 to 1839 (LEVK…QSQK), and 1894 to 1947 (EEQK…VPAP). The span at 1059–1070 (GTASVTPSSETV) shows a compositional bias: polar residues. Ser1080 is subject to Phosphoserine. Low complexity predominate over residues 1268-1277 (DSDSSSGSAS). Residues 1829 to 1839 (GQATRSSQSQK) show a composition bias toward polar residues. Positions 1894-1911 (EEQKKKKPNPGKDKKTSE) are enriched in basic and acidic residues. The segment covering 1912–1934 (AHPAASVSKSSPSPPLAAAGPSA) has biased composition (low complexity). The RING-type; atypical zinc-finger motif lies at 1952-1991 (CQICHEIFKSKNMRVLKCGHKFHKGCFKQWLKGQSTCPTC).

As to quaternary structure, interacts (when phosphorylated on Ser-397) with AKT1, AKT2 and AKT3 (when phosphorylated). Interacts with CIT. Interacts with POLG. Interacts with HSP70. Interacts with SMURF2. Phosphorylation on Ser-397 by Akt is required for ubiquitin ligase activity. In terms of processing, proteolytically cleaved into differently sized N- and C-terminal fragments.

The protein localises to the nucleus. The protein resides in the cytoplasm. It localises to the golgi apparatus. It carries out the reaction S-ubiquitinyl-[E2 ubiquitin-conjugating enzyme]-L-cysteine + [acceptor protein]-L-lysine = [E2 ubiquitin-conjugating enzyme]-L-cysteine + N(6)-ubiquitinyl-[acceptor protein]-L-lysine.. Its pathway is protein modification; protein ubiquitination. E3 ubiquitin-protein ligase which catalyzes the formation of 'Lys-48'-polyubiquitin chains. Mediates the ubiquitination and subsequent degradation of phosphorylated Akt (AKT1, AKT2 and AKT3) in the nucleus. Acts as a terminal regulator of Akt signaling after activation; its phosphorylation by Akt, which is a prerequisite for ubiquitin ligase activity, suggests the existence of a regulation mechanism required to control Akt levels after activation. Positively regulates TGFB1-induced epithelial-mesenchymal transition and myofibroblast differentiation by mediating the ubiquitination and subsequent degradation of SMURF2. Regulates neuronal differentiation by regulating actin remodeling and Golgi organization via a signaling cascade involving RHOA, CIT and ROCK. Inhibits cell proliferation. The polypeptide is E3 ubiquitin-protein ligase TTC3 (Rattus norvegicus (Rat)).